We begin with the raw amino-acid sequence, 704 residues long: Elongation factor G (704 aa).

A tr-type G domain is found at 10-286; that stretch reads KKVRNIGIMA…AVIDFLPNPM (277 aa). GTP contacts are provided by residues 19–26, 83–87, and 137–140; these read AHIDAGKT, DTPGH, and NKMD.

The protein belongs to the TRAFAC class translation factor GTPase superfamily. Classic translation factor GTPase family. EF-G/EF-2 subfamily.

The protein localises to the cytoplasm. Its function is as follows. Catalyzes the GTP-dependent ribosomal translocation step during translation elongation. During this step, the ribosome changes from the pre-translocational (PRE) to the post-translocational (POST) state as the newly formed A-site-bound peptidyl-tRNA and P-site-bound deacylated tRNA move to the P and E sites, respectively. Catalyzes the coordinated movement of the two tRNA molecules, the mRNA and conformational changes in the ribosome. The sequence is that of Elongation factor G from Corynebacterium jeikeium (strain K411).